Consider the following 550-residue polypeptide: Probable acyl-activating enzyme 9 (550 aa).

This sequence belongs to the ATP-dependent AMP-binding enzyme family. Expressed in leaves, flowers and developing seeds.

In terms of biological role, may act as an acid--thiol ligase that activates carboxylic acids by forming acyl-CoAs. This is Probable acyl-activating enzyme 9 (AEE9) from Arabidopsis thaliana (Mouse-ear cress).